The following is a 530-amino-acid chain: Bifunctional purine biosynthesis protein PurH (530 aa).

The 148-residue stretch at 1–148 (MNNARPIRRA…KNHKDVTIVV (148 aa)) folds into the MGS-like domain.

It belongs to the PurH family.

The catalysed reaction is (6R)-10-formyltetrahydrofolate + 5-amino-1-(5-phospho-beta-D-ribosyl)imidazole-4-carboxamide = 5-formamido-1-(5-phospho-D-ribosyl)imidazole-4-carboxamide + (6S)-5,6,7,8-tetrahydrofolate. It carries out the reaction IMP + H2O = 5-formamido-1-(5-phospho-D-ribosyl)imidazole-4-carboxamide. Its pathway is purine metabolism; IMP biosynthesis via de novo pathway; 5-formamido-1-(5-phospho-D-ribosyl)imidazole-4-carboxamide from 5-amino-1-(5-phospho-D-ribosyl)imidazole-4-carboxamide (10-formyl THF route): step 1/1. It participates in purine metabolism; IMP biosynthesis via de novo pathway; IMP from 5-formamido-1-(5-phospho-D-ribosyl)imidazole-4-carboxamide: step 1/1. In Vibrio vulnificus (strain YJ016), this protein is Bifunctional purine biosynthesis protein PurH.